Consider the following 1268-residue polypeptide: MNDLKRSIQKFQFNVAEPEAFKRWLARNKLTFVEDGKNLSERERTRLLLGCLEESTFHRYEDSQREISDIYSISFDDTVTALTKIFGSTKSLMMRRQQCLQICRANGLSQDYLDYTNSISDAVLDSKLSSMTSDEWSIFLFLRGLNSPGDEKAKLYLMQYVEASEKKNEKLKLSDVHDEWMKFIQMHQQSKIVSVKPSKSSQQVDVNKVDTNRSKKKKKPIPRKPEKSSQDSKKKGEIPTCFYCNKKGHYATNCRSNPKTGNQGGNKGKSKGCDSVHVDGLDVKTEHQAKHRMSVEVCGKDVAFQLDTGSMITLISVKCWEKLGSPPLEKVPHRISCANGTPMAVKGRCLVKFKLKGIEYTEYVYVRDRQTNLLGTSWLNLCPQMRSALAQIVNQVSTSETEASRLEVMLKNDFPEVFKDGLGLCTKEKAEFRTEENAVPVFKRARPVPYGSLEAVETELNRLQEMGVIVPITYAKWAAPIVVIKKKGTGKIRVCADFKCSGLNAALKDEFHPLPTSEDIFSRLKGTVYSQIDLKDAYLQVELDEEAQKLAVINTHRGIFKYLRMTFGLKPAPASFQKIMDKMVSGLTGVAVYWDDIIISASSIEEHEKILRELFERFKEYGFRVSAEKCAFAQKQVTFLGFVDEHGRRPDSKKTEAIRSMKAPTDQKQLASFLGAADWLSRMMQDHQQNADDVVIAEIYDDDDDEDDSIIQKLNPVTETDIRFESQKDHEVSSVVKLVRNDSWKPKPSTEIEKHWIRYRDRLKLIHGCLLLDDRVIVPKSLQKIVLKQLHEGHPGIVQMKQKARSFVFWRGLDSDIENMVRHCNNCQENSKMPRVVPLNPWPVPEAPWKRIHIDFAGPLNGCYLLVVVDAKTKYAEVKLTRSISAVTTIDLLEEIFSIHGYPETIISDNGTQLTSHLFAQMCQSHGIEHKTSAVYYPRSNGAAERFVDTLKRGIAKIKGEGSVNQQILNKFLISYRNTPHSALNGSTPAECHFGRKIRTTMSLLMPTDRVLKVPKLTQYQQNMKHHYELRNGARAKAFQVNQKVYVQVHHGNKSQWKHGVIRRKFGGVLYEVQVGDRMQKSHVNQIRTRYGDYSRSSVNPRLSSDPLGFVGESGGDEMSRNDDPVVTSNGSSTDVNRGSRITSELKKKESNAVRGQPCGSCSPTNNDVSAPGYASRSHPTTDPSHSVRRSSRIRRVLDRYGSSVEHPSTSTGTPRGSTSTQLGQASTRNGSRYTASGRNPSCQGNRYSSIRGEGVTARRERVRTTWR.

Residues 191–206 (KIVSVKPSKSSQQVDV) show a composition bias toward low complexity. Disordered regions lie at residues 191–235 (KIVS…SKKK) and 253–273 (NCRSNPKTGNQGGNKGKSKGC). The span at 223–235 (RKPEKSSQDSKKK) shows a compositional bias: basic and acidic residues. The segment at 239 to 256 (PTCFYCNKKGHYATNCRS) adopts a CCHC-type zinc-finger fold. Positions 465–644 (EMGVIVPITY…KQVTFLGFVD (180 aa)) constitute a Reverse transcriptase domain. The Integrase catalytic domain maps to 844–997 (VPEAPWKRIH…TPAECHFGRK (154 aa)). The segment at 1092-1268 (GDYSRSSVNP…RRERVRTTWR (177 aa)) is disordered. 2 stretches are compositionally biased toward polar residues: residues 1127–1143 (VTSNGSSTDVNRGSRIT) and 1160–1169 (GSCSPTNNDV). Residues 1208–1221 (PSTSTGTPRGSTST) are compositionally biased toward low complexity. Over residues 1222–1249 (QLGQASTRNGSRYTASGRNPSCQGNRYS) the composition is skewed to polar residues. Residues 1257–1268 (TARRERVRTTWR) are compositionally biased toward basic and acidic residues.

This is an uncharacterized protein from Caenorhabditis elegans.